The chain runs to 62 residues: DNA-directed RNA polymerase subunit omega (62 aa).

The protein belongs to the RNA polymerase subunit omega family. The RNAP catalytic core consists of 2 alpha, 1 beta, 1 beta' and 1 omega subunit. When a sigma factor is associated with the core the holoenzyme is formed, which can initiate transcription.

It catalyses the reaction RNA(n) + a ribonucleoside 5'-triphosphate = RNA(n+1) + diphosphate. Promotes RNA polymerase assembly. Latches the N- and C-terminal regions of the beta' subunit thereby facilitating its interaction with the beta and alpha subunits. The sequence is that of DNA-directed RNA polymerase subunit omega from Wigglesworthia glossinidia brevipalpis.